Consider the following 64-residue polypeptide: Putative neurotoxin-G (64 aa).

Positions 1 to 19 (MFAMVTVTVLLLISSGIFC) are cleaved as a signal peptide. 3 disulfides stabilise this stretch: Cys25/Cys45, Cys32/Cys54, and Cys36/Cys56.

As to expression, expressed by the venom gland.

Its subcellular location is the secreted. This chain is Putative neurotoxin-G, found in Lychas mucronatus (Chinese swimming scorpion).